The primary structure comprises 456 residues: UDP-N-acetylmuramoylalanine--D-glutamate ligase (456 aa).

121–127 lines the ATP pocket; sequence GTNGKTT.

This sequence belongs to the MurCDEF family.

The protein localises to the cytoplasm. It catalyses the reaction UDP-N-acetyl-alpha-D-muramoyl-L-alanine + D-glutamate + ATP = UDP-N-acetyl-alpha-D-muramoyl-L-alanyl-D-glutamate + ADP + phosphate + H(+). Its pathway is cell wall biogenesis; peptidoglycan biosynthesis. Cell wall formation. Catalyzes the addition of glutamate to the nucleotide precursor UDP-N-acetylmuramoyl-L-alanine (UMA). This is UDP-N-acetylmuramoylalanine--D-glutamate ligase from Desulfotalea psychrophila (strain LSv54 / DSM 12343).